Consider the following 302-residue polypeptide: MTNALYQSSINSLPLLGHGKVRDNYAVGNDKLLIVTTDRLSAFDVIMGEPIPDKGRVLNQMANFWFRKLAHIVPNHETGIAPETVVAADEVEQVRGRAVVVKRLKPILVEAVVRGYLAGSGWKDYQATGKVCGIELPPGLQNAQKLPEPIFTPAAKAEMGEHDENISFAEVEARIGIALARQMREISIRLYKEAAEFAATRGIIIADTKFEFGLDDNGVLTLMDEVLTADSSRFWPADSYQVGTNPPSFDKQFVRDWLEAVRIDGKPWPKTAPAPKLPDDVIEKTAAKYREALTRLTGEELK.

The protein belongs to the SAICAR synthetase family.

The catalysed reaction is 5-amino-1-(5-phospho-D-ribosyl)imidazole-4-carboxylate + L-aspartate + ATP = (2S)-2-[5-amino-1-(5-phospho-beta-D-ribosyl)imidazole-4-carboxamido]succinate + ADP + phosphate + 2 H(+). Its pathway is purine metabolism; IMP biosynthesis via de novo pathway; 5-amino-1-(5-phospho-D-ribosyl)imidazole-4-carboxamide from 5-amino-1-(5-phospho-D-ribosyl)imidazole-4-carboxylate: step 1/2. This chain is Phosphoribosylaminoimidazole-succinocarboxamide synthase, found in Cupriavidus taiwanensis (strain DSM 17343 / BCRC 17206 / CCUG 44338 / CIP 107171 / LMG 19424 / R1) (Ralstonia taiwanensis (strain LMG 19424)).